Here is a 122-residue protein sequence, read N- to C-terminus: Large ribosomal subunit protein uL14 (122 aa).

This sequence belongs to the universal ribosomal protein uL14 family. Part of the 50S ribosomal subunit. Forms a cluster with proteins L3 and L19. In the 70S ribosome, L14 and L19 interact and together make contacts with the 16S rRNA in bridges B5 and B8.

In terms of biological role, binds to 23S rRNA. Forms part of two intersubunit bridges in the 70S ribosome. The protein is Large ribosomal subunit protein uL14 of Microcystis aeruginosa (strain NIES-843 / IAM M-2473).